A 224-amino-acid chain; its full sequence is MLPSSIQPCSWILLLLLVNSSLLWKNVASFPMCAMRNGRCFMSFEDTFELAGSLSHNISIEVSELFNEFEKHYSNVSGLRDKSPMRCNTSFLPTPENKEQARLTHYAALLKSGAMILDAWESPLDDLVSELSTIKNVPDIIISKATDIKKKINAVRNGVNALMSTMLQNGDEEKKNPAWFLQSDNEDARIHSLYGMISCLDNDFKKVDIYLNVLKCYMLKIDNC.

The signal sequence occupies residues 1 to 29 (MLPSSIQPCSWILLLLLVNSSLLWKNVAS). Asn19 carries N-linked (GlcNAc...) asparagine glycosylation. A disulfide bridge links Cys33 with Cys40. Asn57, Asn75, and Asn88 each carry an N-linked (GlcNAc...) asparagine glycan. 2 cysteine pairs are disulfide-bonded: Cys87-Cys199 and Cys216-Cys224.

This sequence belongs to the somatotropin/prolactin family. In terms of processing, N-glycosylated and sialylated. As to expression, expressed in placenta and hair follicles, with highest expression levels detected in the outer root sheath and no expression detected in bulb. Expressed in placenta, skin wounds, keratinocytes and weakly in embryonic fibroblasts. Expressed in brain, cerebellum and in Neuro-2a cell line. Not detected in liver, kidney, ovary, pituitary gland and brain.

It is found in the secreted. The protein localises to the endoplasmic reticulum. May have a role in embryonic development. It is likely to provide a growth stimulus to target cells in maternal and fetal tissues during the development of the embryo at mid-gestation. May play a role during wound healing and in the hair follicle cycle as a growth factor and/or an angiogenesis factor. May play a role in microvilli formation and cell proliferation of neuroblastoma cells. This chain is Prolactin-2C3 (Prl2c3), found in Mus musculus (Mouse).